The sequence spans 121 residues: Ribonuclease P protein component (121 aa).

It belongs to the RnpA family. In terms of assembly, consists of a catalytic RNA component (M1 or rnpB) and a protein subunit.

The catalysed reaction is Endonucleolytic cleavage of RNA, removing 5'-extranucleotides from tRNA precursor.. Its function is as follows. RNaseP catalyzes the removal of the 5'-leader sequence from pre-tRNA to produce the mature 5'-terminus. It can also cleave other RNA substrates such as 4.5S RNA. The protein component plays an auxiliary but essential role in vivo by binding to the 5'-leader sequence and broadening the substrate specificity of the ribozyme. The sequence is that of Ribonuclease P protein component from Coxiella burnetii (strain Dugway 5J108-111).